The chain runs to 492 residues: GTPase Der (492 aa).

2 consecutive EngA-type G domains span residues 3–166 (PVVA…VDEV) and 205–378 (IKLA…DSAT). GTP contacts are provided by residues 9–16 (GRPNVGKS), 56–60 (DTGGI), 118–121 (NKTD), 211–218 (GRPNVGKS), 258–262 (DTAGV), and 323–326 (NKWD). Positions 379–463 (RRVSTAMLTR…PIRIQFKEGE (85 aa)) constitute a KH-like domain.

Belongs to the TRAFAC class TrmE-Era-EngA-EngB-Septin-like GTPase superfamily. EngA (Der) GTPase family. Associates with the 50S ribosomal subunit.

Functionally, GTPase that plays an essential role in the late steps of ribosome biogenesis. In Klebsiella pneumoniae subsp. pneumoniae (strain ATCC 700721 / MGH 78578), this protein is GTPase Der.